The primary structure comprises 421 residues: Testin (421 aa).

A PET domain is found at 92–199 (MILTNPVAAK…GDVKLPCEMD (108 aa)). Residues 133–164 (EKQPVAGSEGAQYRKKQLAKQLPAHDQDPSKC) form a disordered region. The span at 155–164 (PAHDQDPSKC) shows a compositional bias: basic and acidic residues. 3 LIM zinc-binding domains span residues 234–297 (YSCY…CDSE), 299–359 (PRCA…NHAV), and 362–421 (QGCH…KMMS).

This sequence belongs to the prickle / espinas / testin family. As to quaternary structure, interacts via LIM domain 1 with ZYX. Interacts (via LIM domain 3) with ENAH and VASP. Interacts with ALKBH4, talin, actin, alpha-actinin, GRIP1 and PXN. Interacts (via LIM domain 2) with ACTL7A (via N-terminus). Heterodimer with ACTL7A; the heterodimer interacts with ENAH to form a heterotrimer.

The protein localises to the cytoplasm. It localises to the cell junction. It is found in the focal adhesion. Functionally, scaffold protein that may play a role in cell adhesion, cell spreading and in the reorganization of the actin cytoskeleton. Plays a role in the regulation of cell proliferation. May act as a tumor suppressor. This chain is Testin (TES), found in Aotus nancymaae (Ma's night monkey).